Consider the following 256-residue polypeptide: Thiazole synthase (256 aa).

K96 functions as the Schiff-base intermediate with DXP in the catalytic mechanism. 1-deoxy-D-xylulose 5-phosphate-binding positions include G157, 184-185, and 206-207; these read AG and NT.

It belongs to the ThiG family. In terms of assembly, homotetramer. Forms heterodimers with either ThiH or ThiS.

The protein localises to the cytoplasm. The catalysed reaction is [ThiS sulfur-carrier protein]-C-terminal-Gly-aminoethanethioate + 2-iminoacetate + 1-deoxy-D-xylulose 5-phosphate = [ThiS sulfur-carrier protein]-C-terminal Gly-Gly + 2-[(2R,5Z)-2-carboxy-4-methylthiazol-5(2H)-ylidene]ethyl phosphate + 2 H2O + H(+). It participates in cofactor biosynthesis; thiamine diphosphate biosynthesis. Catalyzes the rearrangement of 1-deoxy-D-xylulose 5-phosphate (DXP) to produce the thiazole phosphate moiety of thiamine. Sulfur is provided by the thiocarboxylate moiety of the carrier protein ThiS. In vitro, sulfur can be provided by H(2)S. The chain is Thiazole synthase from Bartonella tribocorum (strain CIP 105476 / IBS 506).